We begin with the raw amino-acid sequence, 552 residues long: AP-1-like transcription factor (552 aa).

Positions methionine 1 to isoleucine 14 are enriched in polar residues. The interval methionine 1–aspartate 99 is disordered. The segment covering proline 36–serine 47 has biased composition (basic and acidic residues). Over residues glutamate 48–aspartate 61 the composition is skewed to acidic residues. Positions glycine 62–serine 80 are enriched in basic and acidic residues. Positions glutamine 76–leucine 139 constitute a bZIP domain. The Nuclear localization signal motif lies at lysine 81–alanine 88. Positions lysine 81 to lysine 102 are basic motif. The tract at residues leucine 104–leucine 111 is leucine-zipper. The segment at glutamine 213 to leucine 244 is disordered. The span at valine 219–leucine 228 shows a compositional bias: polar residues. A compositionally biased stretch (low complexity) spans serine 229–serine 240. Positions cysteine 259 to cysteine 290 are n-CRD. 2 cysteine pairs are disulfide-bonded: cysteine 278-cysteine 501 and cysteine 285-cysteine 532. Residues isoleucine 460 to glutamate 489 form a disordered region. Residues cysteine 501–cysteine 532 are c-CRD. Positions glutamate 515–serine 533 match the Nuclear export signal motif.

Belongs to the bZIP family. YAP subfamily. Homodimer. The reduced form of pap1 interacts in the nucleus with the nuclear export protein crm1, and in the cytoplasm with the peroxiredoxin tpx1. Depending on the oxidative stress inducing agent, pap1 can undergo two distinct conformational changes, both masking the nuclear export signal, thus abolishing nuclear export by crm1/exportin 1. The glutathione-depleting agent diethylmaleate (DEM) leads to the non-reversible modification of at least 2 cysteine residues in the c-CRD. Peroxide stress induces the formation of a tpx1-dependent interdomain disulfide bond between Cys-278 and Cys-501.

The protein resides in the nucleus. It is found in the cytoplasm. Functionally, transcription activator involved in multidrug resistance, oxidative stress response, and redox homeostasis. Regulates the transcription of genes encoding antioxidant enzymes like catalase ctt1 and components of the cellular thiol-reducing pathways, including the thioredoxin system (trx2, trr1), ABC transporters involved in multidrug resistance like bfr1/hba2 and pmd1 as well as the gene obr1/apt1. Preferentially binds to promoters with the core binding site 5'-TTA[CG]TAA-3'. Activity of the transcription factor is controlled through oxidation of specific cysteine residues resulting in the alteration of its subcellular location. Oxidative stress induces nuclear accumulation and as a result pap1 transcriptional activity. Required for sty1/spc1-conferred staurosporine resistance. The polypeptide is AP-1-like transcription factor (pap1) (Schizosaccharomyces pombe (strain 972 / ATCC 24843) (Fission yeast)).